Consider the following 73-residue polypeptide: Large ribosomal subunit protein bL31 (73 aa).

It belongs to the bacterial ribosomal protein bL31 family. Type A subfamily. As to quaternary structure, part of the 50S ribosomal subunit.

In terms of biological role, binds the 23S rRNA. The chain is Large ribosomal subunit protein bL31 from Rhodospirillum centenum (strain ATCC 51521 / SW).